A 1482-amino-acid polypeptide reads, in one-letter code: Type VII secretion system protein EssC (1482 aa).

Over methionine 1–asparagine 229 the chain is Cytoplasmic. Residues threonine 230–valine 252 traverse the membrane as a helical segment. At arginine 253–glycine 256 the chain is on the extracellular side. A helical transmembrane segment spans residues isoleucine 257–serine 279. The Cytoplasmic segment spans residues glutamate 280–glycine 1482. 2 consecutive FtsK domains span residues aspartate 652–asparagine 846 and glutamine 997–threonine 1183. ATP is bound by residues glycine 672–serine 679 and glycine 1014–threonine 1021.

It belongs to the EssC family. In terms of assembly, homooligomer. Interacts with EsaE.

Its subcellular location is the cell membrane. Functionally, component of the type VII secretion system (Ess). Required for the secretion of substrates including EsxA and EsxB. However, unable to support secretion of the substrate protein EsxC. The sequence is that of Type VII secretion system protein EssC from Staphylococcus aureus (strain MRSA252).